A 532-amino-acid polypeptide reads, in one-letter code: CTP synthase (532 aa).

The amidoligase domain stretch occupies residues 1–267 (MTKFIFVTGG…DDIVLKILGL (267 aa)). S13 provides a ligand contact to CTP. S13 is a UTP binding site. 14 to 19 (SLGKGI) serves as a coordination point for ATP. L-glutamine is bound at residue Y54. D71 lines the ATP pocket. Positions 71 and 141 each coordinate Mg(2+). Residues 148-150 (DIE), 188-193 (KTKPTQ), and K224 each bind CTP. UTP is bound by residues 188–193 (KTKPTQ) and K224. The Glutamine amidotransferase type-1 domain occupies 292–532 (EIAIVGKYVE…EFVKATLANR (241 aa)). G354 contacts L-glutamine. C381 serves as the catalytic Nucleophile; for glutamine hydrolysis. Residues 382-385 (LGMQ), E405, and R462 contribute to the L-glutamine site. Catalysis depends on residues H507 and E509.

Belongs to the CTP synthase family. Homotetramer.

The enzyme catalyses UTP + L-glutamine + ATP + H2O = CTP + L-glutamate + ADP + phosphate + 2 H(+). It carries out the reaction L-glutamine + H2O = L-glutamate + NH4(+). The catalysed reaction is UTP + NH4(+) + ATP = CTP + ADP + phosphate + 2 H(+). It functions in the pathway pyrimidine metabolism; CTP biosynthesis via de novo pathway; CTP from UDP: step 2/2. Allosterically activated by GTP, when glutamine is the substrate; GTP has no effect on the reaction when ammonia is the substrate. The allosteric effector GTP functions by stabilizing the protein conformation that binds the tetrahedral intermediate(s) formed during glutamine hydrolysis. Inhibited by the product CTP, via allosteric rather than competitive inhibition. Its function is as follows. Catalyzes the ATP-dependent amination of UTP to CTP with either L-glutamine or ammonia as the source of nitrogen. Regulates intracellular CTP levels through interactions with the four ribonucleotide triphosphates. The polypeptide is CTP synthase (Desulfitobacterium hafniense (strain Y51)).